Reading from the N-terminus, the 143-residue chain is Transcriptional regulator MraZ (143 aa).

2 consecutive SpoVT-AbrB domains span residues 5–47 (THTP…PRAE) and 76–119 (TDEQ…DAQA).

The protein belongs to the MraZ family. In terms of assembly, forms oligomers.

It localises to the cytoplasm. It is found in the nucleoid. The polypeptide is Transcriptional regulator MraZ (Mycobacterium leprae (strain Br4923)).